Here is a 558-residue protein sequence, read N- to C-terminus: Phosphatase and actin regulator 3 (558 aa).

A compositionally biased stretch (polar residues) spans 1–11; sequence MAASEDGSSCL. 3 disordered regions span residues 1 to 69, 81 to 288, and 300 to 366; these read MAAS…KLAT, KKKN…RPLP, and LATK…ENLM. The segment covering 18–33 has biased composition (low complexity); that stretch reads QSDPSFLSDSSATSTD. T69 is subject to Phosphothreonine. One copy of the RPEL 1 repeat lies at 92-117; sequence SALEKKMAGRQGREELIKQGLLEMME. Positions 94 to 108 are enriched in basic and acidic residues; the sequence is LEKKMAGRQGREELI. Over residues 144–169 the composition is skewed to polar residues; that stretch reads ETLTSEGAQPGSPSASGTDQVSQDEL. The span at 228–239 shows a compositional bias: pro residues; the sequence is PSPPLLPTPPPK. S229 is subject to Phosphoserine. T235 carries the post-translational modification Phosphothreonine. Basic and acidic residues-rich tracts occupy residues 300-341 and 354-363; these read LATK…RDEA and ATKDSEENKE. 3 RPEL repeats span residues 400–425, 438–463, and 476–501; these read ELLA…PRRT, MKLS…KQRN, and QRLT…IRFS. Residues 449 to 485 are a coiled coil; that stretch reads AVEELERRNILKQRNDQTEQEERREIKQRLTRKLNQR.

The protein belongs to the phosphatase and actin regulator family. In terms of assembly, binds PPP1CA and actin; thus inhibiting the protein phosphatase 1 (PP1) activity.

Its subcellular location is the nucleus matrix. This is Phosphatase and actin regulator 3 (Phactr3) from Mus musculus (Mouse).